The following is a 256-amino-acid chain: 1-(5-phosphoribosyl)-5-[(5-phosphoribosylamino)methylideneamino] imidazole-4-carboxamide isomerase (256 aa).

Catalysis depends on D8, which acts as the Proton acceptor. Residue D129 is the Proton donor of the active site.

The protein belongs to the HisA/HisF family.

The protein localises to the cytoplasm. The enzyme catalyses 1-(5-phospho-beta-D-ribosyl)-5-[(5-phospho-beta-D-ribosylamino)methylideneamino]imidazole-4-carboxamide = 5-[(5-phospho-1-deoxy-D-ribulos-1-ylimino)methylamino]-1-(5-phospho-beta-D-ribosyl)imidazole-4-carboxamide. Its pathway is amino-acid biosynthesis; L-histidine biosynthesis; L-histidine from 5-phospho-alpha-D-ribose 1-diphosphate: step 4/9. The protein is 1-(5-phosphoribosyl)-5-[(5-phosphoribosylamino)methylideneamino] imidazole-4-carboxamide isomerase of Prochlorococcus marinus (strain NATL1A).